Consider the following 155-residue polypeptide: Small ribosomal subunit protein uS7cz/uS7cy (155 aa).

This sequence belongs to the universal ribosomal protein uS7 family. As to quaternary structure, part of the 30S ribosomal subunit.

The protein localises to the plastid. It localises to the chloroplast. Its function is as follows. One of the primary rRNA binding proteins, it binds directly to 16S rRNA where it nucleates assembly of the head domain of the 30S subunit. The sequence is that of Small ribosomal subunit protein uS7cz/uS7cy (rps7-A) from Morus indica (Mulberry).